A 279-amino-acid chain; its full sequence is Large ribosomal subunit protein uL2 (279 aa).

The interval 222 to 279 is disordered; that stretch reads GVAMNPVDHPHGGGEGRTSGGRHPVTPAGKPTKGAKTRVNKATDKFIIRSRHKAKKGR. Residues 269 to 279 are compositionally biased toward basic residues; sequence IRSRHKAKKGR.

The protein belongs to the universal ribosomal protein uL2 family. In terms of assembly, part of the 50S ribosomal subunit. Forms a bridge to the 30S subunit in the 70S ribosome.

Functionally, one of the primary rRNA binding proteins. Required for association of the 30S and 50S subunits to form the 70S ribosome, for tRNA binding and peptide bond formation. It has been suggested to have peptidyltransferase activity; this is somewhat controversial. Makes several contacts with the 16S rRNA in the 70S ribosome. The polypeptide is Large ribosomal subunit protein uL2 (Caulobacter vibrioides (strain ATCC 19089 / CIP 103742 / CB 15) (Caulobacter crescentus)).